A 496-amino-acid chain; its full sequence is MKKATVGAVVVGTAAAVAVAALIMRHRMGKSSKWARARAILKEFEEKCATPDGKLKQVADAMTVEMHAGLASEGGSKLKMLISYVDNLPTGDEGGVFYALDLGGTNFRVLRVQLGGKDGGIIHQEFAEASIPPNLMVGTSEALFDYIAAELAKFVAEEGEEFHPPPGRQRELGFTFSFPIMQTSINSGTLIRWTKGFSIDDTVGKDVVAELTKAMQKREIDMRVSALVNDTVGTLAGGRFTNKDVSIAVILGTGTNAAYVERAQAIPKWHGPLPKSGEMVINMEWGNFRSSHLPLTEYDHAMDTNSLNPGEQIFEKICSGMYLGEILRRVLLRMAEEAGIFGEEVPPKLKNSFILRTPEMSAMHHDTSSDLRVVGDKLKDILEISNSSLKTRRLVVELCNIVATRGARLAAAGILGIIKKMGKDTPRESGPEKIVVAMDGGLYEHYTEYSKCLENTLVELLGKEMATSIVFKHANDGSGIGAALLAASNSVYVEDK.

Residues 4-24 form a helical membrane-spanning segment; it reads ATVGAVVVGTAAAVAVAALIM. The Hexokinase domain maps to 35-487; sequence ARARAILKEF…SGIGAALLAA (453 aa). Residues 90-228 are hexokinase small subdomain; it reads TGDEGGVFYA…EIDMRVSALV (139 aa). G104, T105, and N106 together coordinate ADP. Positions 194, 195, 229, and 230 each coordinate D-glucose. Residues 229-476 are hexokinase large subdomain; the sequence is NDTVGTLAGG…TSIVFKHAND (248 aa). T253 is an ADP binding site. D-glucose-binding residues include N256, E284, and E315. An ADP-binding site is contributed by G441.

It belongs to the hexokinase family.

It localises to the plastid. The protein resides in the chloroplast outer membrane. It catalyses the reaction a D-hexose + ATP = a D-hexose 6-phosphate + ADP + H(+). The catalysed reaction is D-fructose + ATP = D-fructose 6-phosphate + ADP + H(+). The enzyme catalyses D-glucose + ATP = D-glucose 6-phosphate + ADP + H(+). Its pathway is carbohydrate metabolism; hexose metabolism. It participates in carbohydrate degradation; glycolysis; D-glyceraldehyde 3-phosphate and glycerone phosphate from D-glucose: step 1/4. Its function is as follows. Fructose and glucose phosphorylating enzyme. May be involved in the phosphorylation of glucose during the export from plastids to cytosol. Seems neither to be involved in cell sugar sensing nor in carbohydrate metabolism in tuber. This chain is Hexokinase-2 (HXK2), found in Solanum tuberosum (Potato).